We begin with the raw amino-acid sequence, 412 residues long: FAD-dependent monooxygenase nscC (412 aa).

Positions 1-21 (MGKQQETILIIGAGIAGLTTS) are cleaved as a signal peptide. The FAD site is built by Glu35 and Ala46. Residue Asn92 is glycosylated (N-linked (GlcNAc...) asparagine). Arg119 contacts FAD. N-linked (GlcNAc...) asparagine glycans are attached at residues Asn170 and Asn231. FAD is bound by residues Asp326 and Gly339.

Belongs to the paxM FAD-dependent monooxygenase family. Requires FAD as cofactor.

The protein operates within secondary metabolite biosynthesis. In terms of biological role, FAD-dependent monooxygenase; part of the gene cluster that mediates the biosynthesis of neosartoricin B, a prenylated anthracenone that probably exhibits T-cell antiproliferative activity, suggestive of a physiological role as an immunosuppressive agent. The non-reducing polyketide synthase nscA probably synthesizes and cyclizes the decaketide backbone. The hydrolase nscB then mediates the product release through hydrolysis followed by spontaneous decarboxylation. The prenyltransferase nscD catalyzes the addition of the dimethylallyl group to the aromatic C5. The FAD-dependent monooxygenase nscC is then responsible for the stereospecific hydroxylation at C2. Neosartoricin B can be converted into two additional compounds neosartoricins C and D. Neosartoricin C is a spirocyclic compound that is cyclized through the attack of C3 hydroxyl on C14, followed by dehydration. On the other hand, neosartoricin D is a further cyclized compound in which attack of C2 on C14 in neosartoricin C results in the formation of the acetal-containing dioxabicyclo-octanone ring. Both of these compounds are novel and possibly represent related metabolites of the gene cluster. This is FAD-dependent monooxygenase nscC from Arthroderma benhamiae (strain ATCC MYA-4681 / CBS 112371) (Trichophyton mentagrophytes).